A 257-amino-acid chain; its full sequence is 3-methyl-2-oxobutanoate hydroxymethyltransferase (257 aa).

2 residues coordinate Mg(2+): D42 and D86. 3-methyl-2-oxobutanoate is bound by residues 42 to 43 (DS), D86, and K116. E118 contacts Mg(2+). The active-site Proton acceptor is E185.

This sequence belongs to the PanB family. Homodecamer; pentamer of dimers. The cofactor is Mg(2+).

It is found in the cytoplasm. The enzyme catalyses 3-methyl-2-oxobutanoate + (6R)-5,10-methylene-5,6,7,8-tetrahydrofolate + H2O = 2-dehydropantoate + (6S)-5,6,7,8-tetrahydrofolate. It participates in cofactor biosynthesis; (R)-pantothenate biosynthesis; (R)-pantoate from 3-methyl-2-oxobutanoate: step 1/2. Catalyzes the reversible reaction in which hydroxymethyl group from 5,10-methylenetetrahydrofolate is transferred onto alpha-ketoisovalerate to form ketopantoate. The sequence is that of 3-methyl-2-oxobutanoate hydroxymethyltransferase from Prochlorococcus marinus (strain MIT 9215).